The chain runs to 146 residues: Hemoglobin subunit beta (146 aa).

At Val1 the chain carries N-acetylvaline. The region spanning 2-146 (HLTGEEKSAV…VANALAHKYH (145 aa)) is the Globin domain. Thr12 carries the phosphothreonine modification. Ser44 bears the Phosphoserine mark. N6-acetyllysine is present on Lys59. A heme b-binding site is contributed by His63. Lys82 is modified (N6-acetyllysine). A heme b-binding site is contributed by His92. Cys93 carries the S-nitrosocysteine modification. N6-acetyllysine is present on Lys144.

Belongs to the globin family. In terms of assembly, heterotetramer of two alpha chains and two beta chains. As to expression, red blood cells.

Its function is as follows. Involved in oxygen transport from the lung to the various peripheral tissues. The sequence is that of Hemoglobin subunit beta (HBB) from Loris tardigradus (Slender loris).